The chain runs to 147 residues: Biogenesis of lysosome-related organelles complex 1 subunit 1 (147 aa).

Disordered stretches follow at residues 1–25 (MLTSMVKEHHKEQAKRKQEQEVRRK) and 125–147 (SSGAGTSLEASTSASASANPSAT).

This sequence belongs to the BLOC1S1 family. In terms of assembly, component of the biogenesis of lysosome-related organelles complex-1 (BLOC-1) composed of Blos1, Blos2, Blos3, Blos4, Dysb, Muted, Pldn and Snapin. Interacts with Pldn.

Component of the biogenesis of lysosome-related organelles complex-1 (BLOC-1) involved in pigment granule biogenesis and membrane trafficking in synapses. In response to high synaptic activity at neuromuscular junctions, stabilizes Pldn protein levels and, together with Pldn, plays a role in promoting efficient synaptic vesicle recycling and re-formation through early endosomes. In Drosophila melanogaster (Fruit fly), this protein is Biogenesis of lysosome-related organelles complex 1 subunit 1.